Here is a 296-residue protein sequence, read N- to C-terminus: Bifunctional protein FolD 1/3 (296 aa).

NADP(+)-binding positions include 166-168 (GRS), Ser-191, and Ile-232.

The protein belongs to the tetrahydrofolate dehydrogenase/cyclohydrolase family. In terms of assembly, homodimer.

It catalyses the reaction (6R)-5,10-methylene-5,6,7,8-tetrahydrofolate + NADP(+) = (6R)-5,10-methenyltetrahydrofolate + NADPH. The catalysed reaction is (6R)-5,10-methenyltetrahydrofolate + H2O = (6R)-10-formyltetrahydrofolate + H(+). It functions in the pathway one-carbon metabolism; tetrahydrofolate interconversion. Catalyzes the oxidation of 5,10-methylenetetrahydrofolate to 5,10-methenyltetrahydrofolate and then the hydrolysis of 5,10-methenyltetrahydrofolate to 10-formyltetrahydrofolate. The chain is Bifunctional protein FolD 1/3 from Ruegeria pomeroyi (strain ATCC 700808 / DSM 15171 / DSS-3) (Silicibacter pomeroyi).